We begin with the raw amino-acid sequence, 338 residues long: Phosphoribosylformylglycinamidine cyclo-ligase (338 aa).

Belongs to the AIR synthase family.

It localises to the cytoplasm. The catalysed reaction is 2-formamido-N(1)-(5-O-phospho-beta-D-ribosyl)acetamidine + ATP = 5-amino-1-(5-phospho-beta-D-ribosyl)imidazole + ADP + phosphate + H(+). It participates in purine metabolism; IMP biosynthesis via de novo pathway; 5-amino-1-(5-phospho-D-ribosyl)imidazole from N(2)-formyl-N(1)-(5-phospho-D-ribosyl)glycinamide: step 2/2. This Lactococcus lactis subsp. lactis (strain IL1403) (Streptococcus lactis) protein is Phosphoribosylformylglycinamidine cyclo-ligase.